Consider the following 602-residue polypeptide: Elongation factor 4 (602 aa).

One can recognise a tr-type G domain in the interval 2 to 184 (DHIRNFSIIA…AVIARMPPPK (183 aa)). GTP-binding positions include 14–19 (DHGKST) and 131–134 (NKMD).

Belongs to the TRAFAC class translation factor GTPase superfamily. Classic translation factor GTPase family. LepA subfamily.

It localises to the cell inner membrane. It catalyses the reaction GTP + H2O = GDP + phosphate + H(+). Functionally, required for accurate and efficient protein synthesis under certain stress conditions. May act as a fidelity factor of the translation reaction, by catalyzing a one-codon backward translocation of tRNAs on improperly translocated ribosomes. Back-translocation proceeds from a post-translocation (POST) complex to a pre-translocation (PRE) complex, thus giving elongation factor G a second chance to translocate the tRNAs correctly. Binds to ribosomes in a GTP-dependent manner. This Leptothrix cholodnii (strain ATCC 51168 / LMG 8142 / SP-6) (Leptothrix discophora (strain SP-6)) protein is Elongation factor 4.